The following is a 569-amino-acid chain: 2-succinyl-5-enolpyruvyl-6-hydroxy-3-cyclohexene-1-carboxylate synthase (569 aa).

This sequence belongs to the TPP enzyme family. MenD subfamily. In terms of assembly, homodimer. It depends on Mg(2+) as a cofactor. Requires Mn(2+) as cofactor. Thiamine diphosphate is required as a cofactor.

The catalysed reaction is isochorismate + 2-oxoglutarate + H(+) = 5-enolpyruvoyl-6-hydroxy-2-succinyl-cyclohex-3-ene-1-carboxylate + CO2. The protein operates within quinol/quinone metabolism; 1,4-dihydroxy-2-naphthoate biosynthesis; 1,4-dihydroxy-2-naphthoate from chorismate: step 2/7. It functions in the pathway cofactor biosynthesis; phylloquinone biosynthesis. Functionally, catalyzes the thiamine diphosphate-dependent decarboxylation of 2-oxoglutarate and the subsequent addition of the resulting succinic semialdehyde-thiamine pyrophosphate anion to isochorismate to yield 2-succinyl-5-enolpyruvyl-6-hydroxy-3-cyclohexene-1-carboxylate (SEPHCHC). The protein is 2-succinyl-5-enolpyruvyl-6-hydroxy-3-cyclohexene-1-carboxylate synthase of Microcystis aeruginosa (strain NIES-843 / IAM M-2473).